The following is a 486-amino-acid chain: Argininosuccinate lyase (486 aa).

The protein belongs to the lyase 1 family. Argininosuccinate lyase subfamily.

The protein localises to the cytoplasm. It catalyses the reaction 2-(N(omega)-L-arginino)succinate = fumarate + L-arginine. It functions in the pathway amino-acid biosynthesis; L-arginine biosynthesis; L-arginine from L-ornithine and carbamoyl phosphate: step 3/3. This Acidovorax ebreus (strain TPSY) (Diaphorobacter sp. (strain TPSY)) protein is Argininosuccinate lyase.